A 121-amino-acid chain; its full sequence is Glycine cleavage system H protein (121 aa).

The Lipoyl-binding domain maps to V16–K98. At K57 the chain carries N6-lipoyllysine.

This sequence belongs to the GcvH family. The glycine cleavage system is composed of four proteins: P, T, L and H. (R)-lipoate serves as cofactor.

In terms of biological role, the glycine cleavage system catalyzes the degradation of glycine. The H protein shuttles the methylamine group of glycine from the P protein to the T protein. The sequence is that of Glycine cleavage system H protein from Caulobacter vibrioides (strain NA1000 / CB15N) (Caulobacter crescentus).